The following is a 236-amino-acid chain: UPF0257 lipoprotein YnfC (236 aa).

Residues 1 to 16 (MKYKLLPCLLAILLTG) form the signal peptide. Cys17 is lipidated: N-palmitoyl cysteine. Cys17 is lipidated: S-diacylglycerol cysteine.

It belongs to the UPF0257 family.

It localises to the cell membrane. This Escherichia coli O127:H6 (strain E2348/69 / EPEC) protein is UPF0257 lipoprotein YnfC.